We begin with the raw amino-acid sequence, 720 residues long: DNA replication licensing factor mcm7 (720 aa).

The C4-type zinc-finger motif lies at 183-210 (CDQCGAETYQPIQSPTFMPLIMCPSREC). The MCM domain maps to 331-537 (FYEKLAASIA…NDLRLAQHIT (207 aa)). The ATP site is built by tyrosine 344, glycine 383, alanine 385, lysine 386, serine 387, asparagine 488, arginine 513, and arginine 603. Positions 512–515 (SRFD) match the Arginine finger motif.

This sequence belongs to the MCM family. Component of the mcm2-7 complex (RLF-M). The complex forms a toroidal hexameric ring with the proposed subunit order mcm2-mcm6-mcm4-mcm7-mcm3-mcm5. The heterodimer of mmcm3/mcm5 interacts with mcm4, mmcm6, mcm7 and weakly with mcm2. The N-terminus is required for interaction with mmcm3, though this interaction may not be direct, and remains in a complex with mmcm3 throughout the cell cycle. Begins to associate with zmcm6 at the neurula stage. Component of the replisome complex. Component of the CMG helicase complex, composed of the mcm2-7 complex, the GINS complex and cdc45. Post-translationally, ubiquitinated by traip when forks converge following formation of DNA interstrand cross-links. Short ubiquitin chains on mcm7 promote recruitment of DNA glycosylase neil3. If the interstrand cross-link cannot be cleaved by neil3, the ubiquitin chains continue to grow on mcm7, promoting the unloading of the CMG helicase complex by the vcp/p97 ATPase.

It localises to the nucleus. Its subcellular location is the chromosome. It catalyses the reaction ATP + H2O = ADP + phosphate + H(+). Acts as a component of the mcm2-7 complex (mcm complex) which is the putative replicative helicase essential for 'once per cell cycle' DNA replication initiation and elongation in eukaryotic cells. The active ATPase sites in the mcm2-7 ring are formed through the interaction surfaces of two neighboring subunits such that a critical structure of a conserved arginine finger motif is provided in trans relative to the ATP-binding site of the Walker A box of the adjacent subunit. The six ATPase active sites, however, are likely to contribute differentially to the complex helicase activity. The existence of maternal and zygotic forms of mcm3 and mcm6 suggests that specific forms of mcm2-7 complexes may be used during different stages of development. The sequence is that of DNA replication licensing factor mcm7 from Xenopus tropicalis (Western clawed frog).